We begin with the raw amino-acid sequence, 346 residues long: Aspartate-semialdehyde dehydrogenase (346 aa).

NADP(+)-binding positions include 12-15 and 40-41; these read SGAV and RS. R101 contacts phosphate. Catalysis depends on C131, which acts as the Acyl-thioester intermediate. Position 158 (Q158) interacts with substrate. 161-162 contributes to the NADP(+) binding site; the sequence is SG. K225 provides a ligand contact to phosphate. R246 contacts substrate. H253 (proton acceptor) is an active-site residue. Q326 contacts NADP(+).

The protein belongs to the aspartate-semialdehyde dehydrogenase family. In terms of assembly, homodimer.

The enzyme catalyses L-aspartate 4-semialdehyde + phosphate + NADP(+) = 4-phospho-L-aspartate + NADPH + H(+). The protein operates within amino-acid biosynthesis; L-lysine biosynthesis via DAP pathway; (S)-tetrahydrodipicolinate from L-aspartate: step 2/4. Its pathway is amino-acid biosynthesis; L-methionine biosynthesis via de novo pathway; L-homoserine from L-aspartate: step 2/3. It participates in amino-acid biosynthesis; L-threonine biosynthesis; L-threonine from L-aspartate: step 2/5. In terms of biological role, catalyzes the NADPH-dependent formation of L-aspartate-semialdehyde (L-ASA) by the reductive dephosphorylation of L-aspartyl-4-phosphate. In Helicobacter pylori (strain ATCC 700392 / 26695) (Campylobacter pylori), this protein is Aspartate-semialdehyde dehydrogenase.